A 302-amino-acid chain; its full sequence is 4-hydroxy-tetrahydrodipicolinate synthase (302 aa).

Pyruvate is bound at residue threonine 55. The Proton donor/acceptor role is filled by tyrosine 144. Lysine 172 acts as the Schiff-base intermediate with substrate in catalysis. Valine 214 serves as a coordination point for pyruvate.

It belongs to the DapA family. As to quaternary structure, homotetramer; dimer of dimers.

Its subcellular location is the cytoplasm. The catalysed reaction is L-aspartate 4-semialdehyde + pyruvate = (2S,4S)-4-hydroxy-2,3,4,5-tetrahydrodipicolinate + H2O + H(+). It functions in the pathway amino-acid biosynthesis; L-lysine biosynthesis via DAP pathway; (S)-tetrahydrodipicolinate from L-aspartate: step 3/4. Functionally, catalyzes the condensation of (S)-aspartate-beta-semialdehyde [(S)-ASA] and pyruvate to 4-hydroxy-tetrahydrodipicolinate (HTPA). This is 4-hydroxy-tetrahydrodipicolinate synthase from Synechococcus sp. (strain CC9902).